A 240-amino-acid chain; its full sequence is T-cell antigen CD7 (240 aa).

The signal sequence occupies residues 1–25; sequence MAGPPRLLLLPLLLALARGLPGALA. In terms of domain architecture, Ig-like spans 26–130; that stretch reads AQEVQQSPHC…NVYGSGTLVL (105 aa). The Extracellular portion of the chain corresponds to 26–180; it reads AQEVQQSPHC…PDPPAASALP (155 aa). 2 cysteine pairs are disulfide-bonded: Cys-35–Cys-142 and Cys-48–Cys-114. N-linked (GlcNAc...) asparagine glycans are attached at residues Asn-45 and Asn-96. The tract at residues 140 to 172 is disordered; that stretch reads HRCSDAPPRASALPAPPTGSALPDPQTASALPD. A run of 4 repeats spans residues 145-153, 154-162, 163-171, and 172-180. The segment at 145–180 is 4 X 9 AA tandem repeats, potential spacer function; the sequence is APPRASALPAPPTGSALPDPQTASALPDPPAASALP. Residues 181 to 201 traverse the membrane as a helical segment; sequence AALAVISFLLGLGLGVACVLA. Cys-198 carries S-palmitoyl cysteine lipidation. The Cytoplasmic portion of the chain corresponds to 202–240; the sequence is RTQIKKLCSWRDKNSAACVVYEDMSHSRCNTLSSPNQYQ.

As to quaternary structure, interacts with SECTM1. Expressed on T-cells and natural killer (NK) cells and their precursors.

Its subcellular location is the membrane. Transmembrane glycoprotein expressed by T-cells and natural killer (NK) cells and their precursors. Plays a costimulatory role in T-cell activation upon binding to its ligand K12/SECTM1. In turn, mediates the production of cytokines such as IL-2. On resting NK-cells, CD7 activation results in a significant induction of interferon-gamma levels. This Homo sapiens (Human) protein is T-cell antigen CD7 (CD7).